The sequence spans 196 residues: Small ribosomal subunit protein uS4c (196 aa).

Residues 89–157 (MRLDNILFRL…VQNYIASSDP (69 aa)) enclose the S4 RNA-binding domain.

Belongs to the universal ribosomal protein uS4 family. In terms of assembly, part of the 30S ribosomal subunit. Contacts protein S5. The interaction surface between S4 and S5 is involved in control of translational fidelity.

The protein resides in the plastid. Its subcellular location is the chloroplast. In terms of biological role, one of the primary rRNA binding proteins, it binds directly to 16S rRNA where it nucleates assembly of the body of the 30S subunit. With S5 and S12 plays an important role in translational accuracy. The sequence is that of Small ribosomal subunit protein uS4c (rps4) from Elymus canadensis (Canada wild rye).